The chain runs to 355 residues: tRNA-specific 2-thiouridylase MnmA (355 aa).

ATP-binding positions include 6–13 and Leu-33; that span reads LLSGGVDS. Cys-100 acts as the Nucleophile in catalysis. The cysteines at positions 100 and 195 are disulfide-linked. Residue Gly-123 participates in ATP binding. The tract at residues 145–147 is interaction with tRNA; it reads KDQ. Cys-195 (cysteine persulfide intermediate) is an active-site residue.

Belongs to the MnmA/TRMU family.

Its subcellular location is the cytoplasm. The enzyme catalyses S-sulfanyl-L-cysteinyl-[protein] + uridine(34) in tRNA + AH2 + ATP = 2-thiouridine(34) in tRNA + L-cysteinyl-[protein] + A + AMP + diphosphate + H(+). Catalyzes the 2-thiolation of uridine at the wobble position (U34) of tRNA, leading to the formation of s(2)U34. The sequence is that of tRNA-specific 2-thiouridylase MnmA from Borreliella burgdorferi (strain ATCC 35210 / DSM 4680 / CIP 102532 / B31) (Borrelia burgdorferi).